The sequence spans 155 residues: Large ribosomal subunit protein eL24 (155 aa).

A compositionally biased stretch (basic and acidic residues) spans 93-123 (KRNARPETRNATRAKHAEAAKERKEKEAERR). The segment at 93–155 (KRNARPETRN…SAPKVQATSR (63 aa)) is disordered.

It belongs to the eukaryotic ribosomal protein eL24 family.

The polypeptide is Large ribosomal subunit protein eL24 (RPL24) (Yarrowia lipolytica (strain CLIB 122 / E 150) (Yeast)).